A 520-amino-acid chain; its full sequence is Peptide chain release factor 3 (520 aa).

The tr-type G domain maps to 8 to 277 (ESRKTFAIIS…FAPMPNARQT (270 aa)). GTP-binding positions include 17–24 (SHPDAGKT), 85–89 (DTPGH), and 139–142 (NKLD).

This sequence belongs to the TRAFAC class translation factor GTPase superfamily. Classic translation factor GTPase family. PrfC subfamily.

It localises to the cytoplasm. Functionally, increases the formation of ribosomal termination complexes and stimulates activities of RF-1 and RF-2. It binds guanine nucleotides and has strong preference for UGA stop codons. It may interact directly with the ribosome. The stimulation of RF-1 and RF-2 is significantly reduced by GTP and GDP, but not by GMP. This is Peptide chain release factor 3 from Staphylococcus aureus (strain MRSA252).